A 407-amino-acid chain; its full sequence is Peptidase T (407 aa).

His-77 contacts Zn(2+). Residue Asp-79 is part of the active site. Position 138 (Asp-138) interacts with Zn(2+). The active-site Proton acceptor is Glu-172. Zn(2+) contacts are provided by Glu-173, Asp-195, and His-377.

The protein belongs to the peptidase M20B family. Zn(2+) is required as a cofactor.

It localises to the cytoplasm. The enzyme catalyses Release of the N-terminal residue from a tripeptide.. Cleaves the N-terminal amino acid of tripeptides. In Aeromonas salmonicida (strain A449), this protein is Peptidase T.